Here is a 448-residue protein sequence, read N- to C-terminus: UDP-N-acetylmuramoylalanine--D-glutamate ligase (448 aa).

116–122 (GSNAKST) serves as a coordination point for ATP.

This sequence belongs to the MurCDEF family.

The protein resides in the cytoplasm. It carries out the reaction UDP-N-acetyl-alpha-D-muramoyl-L-alanine + D-glutamate + ATP = UDP-N-acetyl-alpha-D-muramoyl-L-alanyl-D-glutamate + ADP + phosphate + H(+). It functions in the pathway cell wall biogenesis; peptidoglycan biosynthesis. Its function is as follows. Cell wall formation. Catalyzes the addition of glutamate to the nucleotide precursor UDP-N-acetylmuramoyl-L-alanine (UMA). This is UDP-N-acetylmuramoylalanine--D-glutamate ligase from Pseudomonas syringae pv. syringae (strain B728a).